A 190-amino-acid polypeptide reads, in one-letter code: Probable chemoreceptor glutamine deamidase CheD (190 aa).

Belongs to the CheD family.

The enzyme catalyses L-glutaminyl-[protein] + H2O = L-glutamyl-[protein] + NH4(+). In terms of biological role, probably deamidates glutamine residues to glutamate on methyl-accepting chemotaxis receptors (MCPs), playing an important role in chemotaxis. This is Probable chemoreceptor glutamine deamidase CheD from Acidiphilium cryptum (strain JF-5).